We begin with the raw amino-acid sequence, 247 residues long: Segregation and condensation protein A (247 aa).

It belongs to the ScpA family. Component of a cohesin-like complex composed of ScpA, ScpB and the Smc homodimer, in which ScpA and ScpB bind to the head domain of Smc. The presence of the three proteins is required for the association of the complex with DNA.

The protein localises to the cytoplasm. Functionally, participates in chromosomal partition during cell division. May act via the formation of a condensin-like complex containing Smc and ScpB that pull DNA away from mid-cell into both cell halves. The sequence is that of Segregation and condensation protein A from Caldanaerobacter subterraneus subsp. tengcongensis (strain DSM 15242 / JCM 11007 / NBRC 100824 / MB4) (Thermoanaerobacter tengcongensis).